Consider the following 625-residue polypeptide: Phosphomethylpyrimidine synthase (625 aa).

Substrate is bound by residues N237, M266, Y295, H331, 351–353 (SRG), 392–395 (DGLR), and E431. H435 contacts Zn(2+). Y458 provides a ligand contact to substrate. Residue H499 coordinates Zn(2+). [4Fe-4S] cluster contacts are provided by C579, C582, and C587.

The protein belongs to the ThiC family. In terms of assembly, homodimer. Requires [4Fe-4S] cluster as cofactor.

It carries out the reaction 5-amino-1-(5-phospho-beta-D-ribosyl)imidazole + S-adenosyl-L-methionine = 4-amino-2-methyl-5-(phosphooxymethyl)pyrimidine + CO + 5'-deoxyadenosine + formate + L-methionine + 3 H(+). The protein operates within cofactor biosynthesis; thiamine diphosphate biosynthesis. Its function is as follows. Catalyzes the synthesis of the hydroxymethylpyrimidine phosphate (HMP-P) moiety of thiamine from aminoimidazole ribotide (AIR) in a radical S-adenosyl-L-methionine (SAM)-dependent reaction. This is Phosphomethylpyrimidine synthase from Cupriavidus metallidurans (strain ATCC 43123 / DSM 2839 / NBRC 102507 / CH34) (Ralstonia metallidurans).